Here is a 492-residue protein sequence, read N- to C-terminus: E3 ubiquitin-protein ligase ARIH2 (492 aa).

Residues 1-11 (MSVDMNSQGSD) are compositionally biased toward polar residues. Residues 1 to 37 (MSVDMNSQGSDSNEEDYDPNCEEEEEEEEDPGDIEDY) are disordered. Over residues 12–36 (SNEEDYDPNCEEEEEEEEDPGDIED) the composition is skewed to acidic residues. The interval 64–111 (TYKESEGALHEHMTSLASVLKVSHSVAKLILVNFHWQVSEILDRYRSN) is UBA-like. Residues 134-343 (PPHHCAVCMQ…SEYYECSRYK (210 aa)) are TRIAD supradomain. Residues cysteine 138, cysteine 141, cysteine 155, histidine 157, cysteine 160, cysteine 163, cysteine 182, cysteine 187, cysteine 227, cysteine 232, cysteine 248, cysteine 251, cysteine 256, cysteine 259, histidine 264, cysteine 269, cysteine 296, and cysteine 299 each contribute to the Zn(2+) site. Residues 138 to 187 (CAVCMQFVRKENLLSLACQHQFCRSCWEQHCSVLVKDGVGVGISCMAQDC) form an RING-type 1 zinc finger. An IBR-type zinc finger spans residues 207 to 269 (DKYRRYLFRD…RQMYHAPTDC (63 aa)). The RING-type 2; atypical zinc-finger motif lies at 296-325 (CPKCNICIEKNGGCNHMQCSKCKHDFCWMC). Cysteine 309 is an active-site residue. 6 residues coordinate Zn(2+): cysteine 314, cysteine 317, cysteine 322, cysteine 325, histidine 332, and cysteine 339. Phosphoserine is present on serine 352. The ariadne domain stretch occupies residues 358-492 (REALKKYLFY…RTLLKDFHDT (135 aa)).

This sequence belongs to the RBR family. Ariadne subfamily. Interacts (via RING-type zinc finger 1) with UBE2L3. Interacts (via RING-type zinc finger 2) with UBE2N. Interacts with neddylated CUL5. Interacts (via RING-type 2) with GFI1B. Interacts with GFI1; prevents its ubiquitination and proteasomal degradation. Interacts with DCUN1D1 (via UBA-like domain); promotes DCUN1D1 ubiquitination. In terms of processing, ubiquitinated. Ubiquitination promotes proteasomal degradation.

It is found in the nucleus. Its subcellular location is the cytoplasm. It carries out the reaction [E2 ubiquitin-conjugating enzyme]-S-ubiquitinyl-L-cysteine + [acceptor protein]-L-lysine = [E2 ubiquitin-conjugating enzyme]-L-cysteine + [acceptor protein]-N(6)-ubiquitinyl-L-lysine.. It participates in protein modification; protein ubiquitination. Autoinhibited by the ariadne domain, which masks the second RING-type zinc finger that contains the active site and inhibits the E3 activity. Inhibition is relieved upon binding to neddylated cullin-RING ubiquitin ligase complexes, which activate the E3 ligase activity of ARIH1. Functionally, E3 ubiquitin-protein ligase, which catalyzes ubiquitination of target proteins together with ubiquitin-conjugating enzyme E2 UBE2L3. Acts as an atypical E3 ubiquitin-protein ligase by working together with cullin-5-RING ubiquitin ligase complex (ECS complex, also named CRL5 complex) and initiating ubiquitination of ECS substrates: associates with ECS complex and specifically mediates addition of the first ubiquitin on ECS targets. The initial ubiquitin is then elongated. E3 ubiquitin-protein ligase activity is activated upon binding to neddylated form of the ECS complex. Mediates 'Lys-6', 'Lys-48'- and 'Lys-63'-linked polyubiquitination. May play a role in myelopoiesis. The chain is E3 ubiquitin-protein ligase ARIH2 (Arih2) from Mus musculus (Mouse).